The chain runs to 316 residues: Galectin-8 (316 aa).

2 Galectin domains span residues 18–151 and 186–316; these read YVST…IGFR and FEAR…VRSW. A carbohydrate contacts are provided by R68, N78, and E88. 248–254 is an a beta-D-galactoside binding site; it reads WGEEERN.

Homodimer. Interacts with CALCOCO2/NDP52. Interacts with PDPN; the interaction is glycosylation-dependent; may participate in connection of the lymphatic endothelium to the surrounding extracellular matrix. Expressed in liver, kidney, cardiac muscle, lung, and brain.

It localises to the cytoplasmic vesicle. The protein resides in the cytoplasm. It is found in the cytosol. In terms of biological role, beta-galactoside-binding lectin that acts as a sensor of membrane damage caused by infection and restricts the proliferation of infecting pathogens by targeting them for autophagy. Detects membrane rupture by binding beta-galactoside ligands located on the lumenal side of the endosome membrane; these ligands becoming exposed to the cytoplasm following rupture. Restricts infection by initiating autophagy via interaction with CALCOCO2/NDP52. Required to restrict infection of bacterial invasion such as S.typhimurium. Also required to restrict infection of Picornaviridae viruses. Has a marked preference for 3'-O-sialylated and 3'-O-sulfated glycans. The sequence is that of Galectin-8 (Lgals8) from Rattus norvegicus (Rat).